The chain runs to 145 residues: Bacilliredoxin MW1318 (145 aa).

It belongs to the bacilliredoxin family.

This chain is Bacilliredoxin MW1318, found in Staphylococcus aureus (strain MW2).